Consider the following 251-residue polypeptide: uncharacterized protein (251 aa).

Residues 1–18 form the signal peptide; sequence MRILIILSIILCSFFARA.

Belongs to the MlaA family.

This is an uncharacterized protein from Rickettsia typhi (strain ATCC VR-144 / Wilmington).